A 695-amino-acid polypeptide reads, in one-letter code: MTEIPAKQITDNDILKDVYKSQNKQFSIDAIDILDLEELKDVQRRKRTEFEGYLKRNRLDVKQWMRYAVFEIEQHDMRRARSIFERALRVHISYVPLWIRYIESELKLGYINHARNILERAITKLPRVDKLWYKYLIVEESLAHFDIVRNLFQKWCSLEPAAHVWDSFTDFEVRQERYEDVRNIYSKYVLIHPQFSTWRKWINFEVRYGSTKTVRSVYSLALDALIAYSESRNELVDDCINLIVEFSKWEALQKEYIRSKSLLEIAIQKWPKSNTLNNALLQFEREHGTAETLENTIILNRKKHYEDILNEKVYDYDTWLLYLQLLENNYPKLVMEAFSNVLNAAIPTSRTKDKYWKQYILIWIKYLTFLELTINDIPLCGQKFEELIHNIIPNDDFTFSKIWILYAEFEIRQDNLEKARSILGRSLGLCPKRKTFKYYIDLETKLREFDRVRILYENFLKFDPLNLDTWRAYVEFEDSLGDEVRVRSVCMIPIQNNIGLFSKSFQLHLLEILIDYEMEYQNFDNIEPLLKKQVELSNFTVEAWTDYAMKKLTVPTEEQVQNFQIMKEERLKDSSALDEQEIEFEFEITDNNKDNARDVFERALNYFKEIKRDEDRARILQSYVDFEGQYGDISSRQRIEKRLPSIVNGIKDIDGLKTQNITYTFPDDENKSNIDTSNILALAHKWKESQEAKSR.

HAT repeat units lie at residues 41–73 (DVQRRKRTEFEGYLKRNRLDVKQWMRYAVFEIE), 75–107 (HDMRRARSIFERALRVHISYVPLWIRYIESELK), 109–141 (GYINHARNILERAITKLPRVDKLWYKYLIVEES), 143–174 (AHFDIVRNLFQKWCSLEPAAHVWDSFTDFEVR), 176–207 (ERYEDVRNIYSKYVLIHPQFSTWRKWINFEVR), 296–328 (TIILNRKKHYEDILNEKVYDYDTWLLYLQLLEN), 333–365 (LVMEAFSNVLNAAIPTSRTKDKYWKQYILIWIK), 375–412 (NDIPLCGQKFEELIHNIIPNDDFTFSKIWILYAEFEIR), 414–445 (DNLEKARSILGRSLGLCPKRKTFKYYIDLETK), 447–479 (REFDRVRILYENFLKFDPLNLDTWRAYVEFEDS), 521–553 (QNFDNIEPLLKKQVELSNFTVEAWTDYAMKKLT), and 591–629 (NNKDNARDVFERALNYFKEIKRDEDRARILQSYVDFEGQ).

The protein belongs to the crooked-neck family. In terms of assembly, associated with the spliceosome.

It localises to the nucleus. Its function is as follows. Involved in pre-mRNA splicing and cell cycle progression. Required for the spliceosome assembly and initiation of the DNA replication. The polypeptide is Pre-mRNA-splicing factor CLF1 (CLF1) (Candida glabrata (strain ATCC 2001 / BCRC 20586 / JCM 3761 / NBRC 0622 / NRRL Y-65 / CBS 138) (Yeast)).